Consider the following 445-residue polypeptide: 6-phosphogluconate dehydrogenase, decarboxylating (445 aa).

Residues 1–4 (AVMG), 22–24 (NRS), 63–65 (VKA), and Asn-91 each bind NADP(+). Residues Asn-91 and 117-119 (SGG) each bind substrate. Lys-172 serves as the catalytic Proton acceptor. Residue 175–176 (HN) coordinates substrate. Glu-179 functions as the Proton donor in the catalytic mechanism. Tyr-180, Lys-249, Arg-276, Arg-434, and His-440 together coordinate substrate.

The protein belongs to the 6-phosphogluconate dehydrogenase family. As to quaternary structure, homodimer.

It carries out the reaction 6-phospho-D-gluconate + NADP(+) = D-ribulose 5-phosphate + CO2 + NADPH. The protein operates within carbohydrate degradation; pentose phosphate pathway; D-ribulose 5-phosphate from D-glucose 6-phosphate (oxidative stage): step 3/3. Its function is as follows. Catalyzes the oxidative decarboxylation of 6-phosphogluconate to ribulose 5-phosphate and CO(2), with concomitant reduction of NADP to NADPH. In Citrobacter amalonaticus, this protein is 6-phosphogluconate dehydrogenase, decarboxylating (gnd).